Here is a 104-residue protein sequence, read N- to C-terminus: uncharacterized protein (104 aa).

A disordered region spans residues Arg55–Pro104.

The protein localises to the plastid. This is an uncharacterized protein from Euglena longa (Euglenophycean alga).